The sequence spans 383 residues: Chorismate synthase (383 aa).

2 residues coordinate NADP(+): arginine 39 and arginine 45. Residues 127-129 (RAS), 249-250 (QS), glycine 294, 309-313 (KPIPT), and arginine 335 each bind FMN.

This sequence belongs to the chorismate synthase family. Homotetramer. It depends on FMNH2 as a cofactor.

It catalyses the reaction 5-O-(1-carboxyvinyl)-3-phosphoshikimate = chorismate + phosphate. It participates in metabolic intermediate biosynthesis; chorismate biosynthesis; chorismate from D-erythrose 4-phosphate and phosphoenolpyruvate: step 7/7. Catalyzes the anti-1,4-elimination of the C-3 phosphate and the C-6 proR hydrogen from 5-enolpyruvylshikimate-3-phosphate (EPSP) to yield chorismate, which is the branch point compound that serves as the starting substrate for the three terminal pathways of aromatic amino acid biosynthesis. This reaction introduces a second double bond into the aromatic ring system. This Caldicellulosiruptor bescii (strain ATCC BAA-1888 / DSM 6725 / KCTC 15123 / Z-1320) (Anaerocellum thermophilum) protein is Chorismate synthase.